A 302-amino-acid polypeptide reads, in one-letter code: Monopolin complex subunit MAM1 (302 aa).

2 disordered regions span residues 53–83 (YHKE…QNNV) and 257–276 (TSEN…SKGK). Polar residues predominate over residues 257-268 (TSENPFSSSPNT).

Component of the monopolin complex composed of at least CSM1, LRS4 and MAM1. The complex associates with the kinetochore during late pachytene. Phosphorylated by CDC5. This phosphorylation is required for the location to the kinetochores during late pachytene.

It is found in the nucleus. In terms of biological role, component of the monopolin complex which promotes monoorientation during meiosis I, required for chromosome segregation during meiosis. The polypeptide is Monopolin complex subunit MAM1 (MAM1) (Saccharomyces cerevisiae (strain ATCC 204508 / S288c) (Baker's yeast)).